A 140-amino-acid polypeptide reads, in one-letter code: ATP synthase epsilon chain (140 aa).

This sequence belongs to the ATPase epsilon chain family. F-type ATPases have 2 components, CF(1) - the catalytic core - and CF(0) - the membrane proton channel. CF(1) has five subunits: alpha(3), beta(3), gamma(1), delta(1), epsilon(1). CF(0) has three main subunits: a, b and c.

Its subcellular location is the cell inner membrane. Its function is as follows. Produces ATP from ADP in the presence of a proton gradient across the membrane. This is ATP synthase epsilon chain from Neisseria meningitidis serogroup C (strain 053442).